Reading from the N-terminus, the 2569-residue chain is Highly reducing polyketide synthase pks5 (2569 aa).

The disordered stretch occupies residues 1 to 25; it reads MVVKFANGVRNRGNGDEGQRGTQRP. Residues 27 to 452 enclose the Ketosynthase family 3 (KS3) domain; the sequence is STPIAIVGMS…GTNVHVIMEA (426 aa). Residues Cys200, His335, and His375 each act as for beta-ketoacyl synthase activity in the active site. The interval 572–892 is malonyl-CoA:ACP transacylase (MAT) domain; that stretch reads IFNGQGAQWY…PYLSCLRRNI (321 aa). Residues 960–1097 are N-terminal hotdog fold; it reads HELLGSSVPG…GYVSAEDSSK (138 aa). Residues 960 to 1268 form a dehydratase (DH) domain region; sequence HELLGSSVPG…LRLQKIQAED (309 aa). Positions 960–1270 constitute a PKS/mFAS DH domain; that stretch reads HELLGSSVPG…LQKIQAEDDN (311 aa). Residue His992 is the Proton acceptor; for dehydratase activity of the active site. The interval 1117–1270 is C-terminal hotdog fold; that stretch reads RVRHVRPDAM…LQKIQAEDDN (154 aa). Asp1179 functions as the Proton donor; for dehydratase activity in the catalytic mechanism. The interval 1457–1567 is methyltransferase (CMet) domain; sequence LEVGAGTGGA…RKLLKPKGKL (111 aa). The segment at 1855-2170 is enoyl reductase (ER) domain; the sequence is DLLNKIEFLE…SGTHMGKIVL (316 aa). The segment at 2195–2371 is ketoreductase (KR) domain; sequence THLIVGGLRG…AISINLGPVD (177 aa). Positions 2485–2562 constitute a Carrier domain; it reads AARKLVSELI…DFAALVASRS (78 aa). Residue Ser2522 is modified to O-(pantetheine 4'-phosphoryl)serine.

In terms of biological role, highly reducing polyketide synthase; part of the gene cluster that mediates the biosynthesis of abscisic acid (ABA), a phytohormone that acts antagonistically toward salicylic acid (SA), jasmonic acid (JA) and ethylene (ETH) signaling, to impede plant defense responses. The first step of the pathway catalyzes the reaction from farnesyl diphosphate to alpha-ionylideneethane performed by the alpha-ionylideneethane synthase abl3 via a three-step reaction mechanism involving 2 neutral intermediates, beta-farnesene and allofarnesene. The cytochrome P450 monooxygenase abl1 might then be involved in the conversion of alpha-ionylideneethane to alpha-ionylideneacetic acid. Alpha-ionylideneacetic acid is further converted to abscisic acid in 2 steps involving the cytochrome P450 monooxygenase abl2 and the short-chain dehydrogenase/reductase abl4, via the intermediates 1'-deoxy-ABA or 1',4'-trans-diol-ABA, depending on the order of action of these 2 enzymes. Abl2 is responsible for the hydroxylation of carbon atom C-1' and abl4 might be involved in the oxidation of the C-4' carbon atom. Pks5 is clearly not involved in the production of ABA. Nonetheless, the possibility cannot be excluded that pks5 may modify ABA into another compound. It also cannot be excluded the possibility that pks5 also has a function completely independent of ABA synthesis. Pks5 is not required for pathogenicity on B.napus cotyledon. This chain is Highly reducing polyketide synthase pks5, found in Leptosphaeria maculans (strain JN3 / isolate v23.1.3 / race Av1-4-5-6-7-8) (Blackleg fungus).